Consider the following 172-residue polypeptide: MNRQEKSVEISELSKILSSSGSVVVAHYKGISVAQIRTSKEGXREAGGGVKVXXNRLVKIAVRDTSVKEVSDLFVGQSLIVYSVDPIVAPKISVNFANDNKQFVVLGGVLENDVLDQCSIKQIASLPNIDGIRAIIISAIQFNATKLLRLLSAPQAQVVRALSAFVDKNKQS.

This sequence belongs to the universal ribosomal protein uL10 family. Part of the ribosomal stalk of the 50S ribosomal subunit. The N-terminus interacts with L11 and the large rRNA to form the base of the stalk. The C-terminus forms an elongated spine to which L12 dimers bind in a sequential fashion forming a multimeric L10(L12)X complex.

In terms of biological role, forms part of the ribosomal stalk, playing a central role in the interaction of the ribosome with GTP-bound translation factors. This chain is Large ribosomal subunit protein uL10 (rplJ), found in Liberibacter africanus subsp. capensis.